Reading from the N-terminus, the 96-residue chain is Small ribosomal subunit protein uS19 (96 aa).

Belongs to the universal ribosomal protein uS19 family.

Its function is as follows. Protein S19 forms a complex with S13 that binds strongly to the 16S ribosomal RNA. This Solibacter usitatus (strain Ellin6076) protein is Small ribosomal subunit protein uS19.